The primary structure comprises 443 residues: Arginine biosynthesis bifunctional protein ArgJ, mitochondrial (443 aa).

Residues Thr179, Lys206, Thr217, Glu303, Asn438, and Ser443 each contribute to the substrate site. The active-site Nucleophile is Thr217.

Belongs to the ArgJ family. Heterodimer of an alpha and a beta chain. Post-translationally, the alpha and beta chains are autoproteolytically processed from a single precursor protein within the mitochondrion.

The protein resides in the mitochondrion matrix. The catalysed reaction is N(2)-acetyl-L-ornithine + L-glutamate = N-acetyl-L-glutamate + L-ornithine. It catalyses the reaction L-glutamate + acetyl-CoA = N-acetyl-L-glutamate + CoA + H(+). It functions in the pathway amino-acid biosynthesis; L-arginine biosynthesis; L-ornithine and N-acetyl-L-glutamate from L-glutamate and N(2)-acetyl-L-ornithine (cyclic): step 1/1. The protein operates within amino-acid biosynthesis; L-arginine biosynthesis; N(2)-acetyl-L-ornithine from L-glutamate: step 1/4. Functionally, catalyzes two activities which are involved in the cyclic version of arginine biosynthesis: the synthesis of acetylglutamate from glutamate and acetyl-CoA, and of ornithine by transacetylation between acetylornithine and glutamate. In Eremothecium gossypii (strain ATCC 10895 / CBS 109.51 / FGSC 9923 / NRRL Y-1056) (Yeast), this protein is Arginine biosynthesis bifunctional protein ArgJ, mitochondrial.